Here is a 159-residue protein sequence, read N- to C-terminus: Crossover junction endodeoxyribonuclease RuvC (159 aa).

Catalysis depends on residues aspartate 7, glutamate 67, and aspartate 139. Mg(2+) contacts are provided by aspartate 7, glutamate 67, and aspartate 139.

It belongs to the RuvC family. As to quaternary structure, homodimer which binds Holliday junction (HJ) DNA. The HJ becomes 2-fold symmetrical on binding to RuvC with unstacked arms; it has a different conformation from HJ DNA in complex with RuvA. In the full resolvosome a probable DNA-RuvA(4)-RuvB(12)-RuvC(2) complex forms which resolves the HJ. Requires Mg(2+) as cofactor.

Its subcellular location is the cytoplasm. The enzyme catalyses Endonucleolytic cleavage at a junction such as a reciprocal single-stranded crossover between two homologous DNA duplexes (Holliday junction).. Its function is as follows. The RuvA-RuvB-RuvC complex processes Holliday junction (HJ) DNA during genetic recombination and DNA repair. Endonuclease that resolves HJ intermediates. Cleaves cruciform DNA by making single-stranded nicks across the HJ at symmetrical positions within the homologous arms, yielding a 5'-phosphate and a 3'-hydroxyl group; requires a central core of homology in the junction. The consensus cleavage sequence is 5'-(A/T)TT(C/G)-3'. Cleavage occurs on the 3'-side of the TT dinucleotide at the point of strand exchange. HJ branch migration catalyzed by RuvA-RuvB allows RuvC to scan DNA until it finds its consensus sequence, where it cleaves and resolves the cruciform DNA. This Thermosynechococcus vestitus (strain NIES-2133 / IAM M-273 / BP-1) protein is Crossover junction endodeoxyribonuclease RuvC.